The primary structure comprises 624 residues: Ceramide transfer protein (624 aa).

Positions 1–11 are enriched in polar residues; that stretch reads MSDNQSWNSSG. The segment at 1-24 is disordered; it reads MSDNQSWNSSGSEEDPETESGPPV. The PH domain occupies 23–117; the sequence is PVERCGVLSK…WVDAIEQHKT (95 aa). Ser126, Ser132, and Ser135 each carry phosphoserine. Residues 202-221 are disordered; the sequence is DDEDDFPTTRSDGDFLHNTN. Residues 263–303 are a coiled coil; that stretch reads IELMVKREESWQKRHDREVEKRRRVEEAYKNVMEELKKKPR. Ser315 is subject to Phosphoserine. Residues 321-327 carry the FFAT motif; the sequence is EFFDAVE. The residue at position 372 (Tyr372) is a Phosphotyrosine. Phosphoserine occurs at positions 373, 377, and 380. One can recognise an START domain in the interval 389 to 618; sequence DVHRFSSQVE…FTSYVQEKTA (230 aa). Positions 472, 493, 530, and 579 each coordinate an N-acylsphing-4-enine.

Interacts with VAPA and VAPB. Interaction with VAPB is less efficient than with VAPA. Interacts (via FFAT motif) with MOSPD2 (via MSP domain). Phosphorylation on Ser-132 decreases the affinity toward phosphatidylinositol 4-phosphate at Golgi membranes and reduces ceramide transfer activity. Inactivated by hyperphosphorylation of serine residues by CSNK1G2/CK1 that triggers dissociation from the Golgi complex, thus down-regulating ER-to-Golgi transport of ceramide and sphingomyelin synthesis.

It is found in the cytoplasm. Its subcellular location is the golgi apparatus. The protein localises to the endoplasmic reticulum. The catalysed reaction is N-hexadecanoylsphing-4-enine(in) = N-hexadecanoylsphing-4-enine(out). Shelters ceramides and diacylglycerol lipids inside its START domain and mediates the intracellular trafficking of ceramides and diacylglycerol lipids in a non-vesicular manner. The protein is Ceramide transfer protein (Cert1) of Mus musculus (Mouse).